The following is a 525-amino-acid chain: Apolipoprotein N-acyltransferase 2 (525 aa).

Helical transmembrane passes span Ile-25 to Leu-45, Phe-56 to Phe-76, Ile-81 to Leu-101, Phe-115 to Tyr-135, Phe-153 to Leu-173, and Leu-200 to Ile-220. The CN hydrolase domain maps to Leu-228–Val-486. Glu-274 (proton acceptor) is an active-site residue. The active site involves Lys-339. The active-site Nucleophile is Cys-397. A helical transmembrane segment spans residues Ala-495–Leu-515.

It belongs to the CN hydrolase family. Apolipoprotein N-acyltransferase subfamily.

It is found in the cell inner membrane. The catalysed reaction is N-terminal S-1,2-diacyl-sn-glyceryl-L-cysteinyl-[lipoprotein] + a glycerophospholipid = N-acyl-S-1,2-diacyl-sn-glyceryl-L-cysteinyl-[lipoprotein] + a 2-acyl-sn-glycero-3-phospholipid + H(+). The protein operates within protein modification; lipoprotein biosynthesis (N-acyl transfer). In terms of biological role, catalyzes the phospholipid dependent N-acylation of the N-terminal cysteine of apolipoprotein, the last step in lipoprotein maturation. In Treponema denticola (strain ATCC 35405 / DSM 14222 / CIP 103919 / JCM 8153 / KCTC 15104), this protein is Apolipoprotein N-acyltransferase 2.